We begin with the raw amino-acid sequence, 618 residues long: Kelch-like protein 40b (618 aa).

The BTB domain occupies 33–100 (VDCVLKIKDK…LYTSNINVTE (68 aa)). The 103-residue stretch at 135-237 (CLAIFRLGLM…PRDYFVKNVE (103 aa)) folds into the BACK domain. Residues 264–284 (PELKKTKNKKSPSEEGQKKGD) are compositionally biased toward basic and acidic residues. Residues 264-297 (PELKKTKNKKSPSEEGQKKGDEEEVEEEEEQEER) are disordered. Acidic residues predominate over residues 285 to 295 (EEEVEEEEEQE). Kelch repeat units follow at residues 356 to 408 (QIFV…EAEN), 409 to 458 (FIFV…SHNE), 459 to 506 (MIYV…IHKN), 508 to 553 (IYVV…SVSG), and 555 to 608 (LYAV…VLGV).

The protein belongs to the KLHL40 family. As to quaternary structure, component of the BCR(KLHL40) E3 ubiquitin ligase complex. Expressed in skeletal muscle. Detected in the eye at much lower levels.

It localises to the cytoplasm. It is found in the myofibril. Its subcellular location is the sarcomere. The protein resides in the a band. The protein localises to the i band. Its function is as follows. Substrate-specific adapter of a BCR (BTB-CUL3-RBX1) E3 ubiquitin ligase complex. Required for skeletal muscle development. The chain is Kelch-like protein 40b (klhl40b) from Danio rerio (Zebrafish).